A 301-amino-acid polypeptide reads, in one-letter code: Glutathione transport system permease protein GsiD (301 aa).

6 helical membrane-spanning segments follow: residues 37 to 57 (VAVAAGLFVLLLIAIAFWAQY), 103 to 123 (LAAGIFSVLVGMMIGTTLGLL), 141 to 161 (VLFAFPGILLAIAVVAIMGSG), 162 to 182 (MANVVVAVAIFSIPAFARLVR), 220 to 240 (IVVFFSMRIGMSIITAASLSF), and 264 to 284 (VIAPHVAIFPSLAIFLTVLAF). The ABC transmembrane type-1 domain occupies 99-288 (TRISLAAGIF…LTVLAFNLLG (190 aa)).

This sequence belongs to the binding-protein-dependent transport system permease family. In terms of assembly, the complex is composed of two ATP-binding proteins (GsiA), two transmembrane proteins (GsiC and GsiD) and a solute-binding protein (GsiB).

The protein localises to the cell inner membrane. Functionally, part of the ABC transporter complex GsiABCD involved in glutathione import. Probably responsible for the translocation of the substrate across the membrane. In Pectobacterium atrosepticum (strain SCRI 1043 / ATCC BAA-672) (Erwinia carotovora subsp. atroseptica), this protein is Glutathione transport system permease protein GsiD.